Here is a 91-residue protein sequence, read N- to C-terminus: UPF0250 protein PFLU_5418 (91 aa).

The protein belongs to the UPF0250 family.

In Pseudomonas fluorescens (strain SBW25), this protein is UPF0250 protein PFLU_5418.